The primary structure comprises 352 residues: DNA-directed RNA polymerase subunit alpha (352 aa).

The tract at residues 1–236 is alpha N-terminal domain (alpha-NTD); the sequence is MTVNIRNWQE…DQLQVFVHFE (236 aa). The alpha C-terminal domain (alpha-CTD) stretch occupies residues 257 to 352; the sequence is SDVNQLNRFL…AKKLEQELLG (96 aa).

The protein belongs to the RNA polymerase alpha chain family. In terms of assembly, homodimer. The RNAP catalytic core consists of 2 alpha, 1 beta, 1 beta' and 1 omega subunit. When a sigma factor is associated with the core the holoenzyme is formed, which can initiate transcription.

The catalysed reaction is RNA(n) + a ribonucleoside 5'-triphosphate = RNA(n+1) + diphosphate. Its function is as follows. DNA-dependent RNA polymerase catalyzes the transcription of DNA into RNA using the four ribonucleoside triphosphates as substrates. The sequence is that of DNA-directed RNA polymerase subunit alpha from Sphingopyxis alaskensis (strain DSM 13593 / LMG 18877 / RB2256) (Sphingomonas alaskensis).